The chain runs to 306 residues: Pseudouridine-5'-phosphate glycosidase (306 aa).

Residue glutamate 28 is the Proton donor of the active site. Positions 89 and 109 each coordinate substrate. Aspartate 139 contacts Mn(2+). A substrate-binding site is contributed by 141 to 143 (SAD). The active-site Nucleophile is lysine 160.

Belongs to the pseudouridine-5'-phosphate glycosidase family. As to quaternary structure, homotrimer. It depends on Mn(2+) as a cofactor.

It carries out the reaction D-ribose 5-phosphate + uracil = psi-UMP + H2O. In terms of biological role, catalyzes the reversible cleavage of pseudouridine 5'-phosphate (PsiMP) to ribose 5-phosphate and uracil. Functions biologically in the cleavage direction, as part of a pseudouridine degradation pathway. The sequence is that of Pseudouridine-5'-phosphate glycosidase from Gemmatimonas aurantiaca (strain DSM 14586 / JCM 11422 / NBRC 100505 / T-27).